Here is a 177-residue protein sequence, read N- to C-terminus: Large ribosomal subunit protein uL6 (177 aa).

Belongs to the universal ribosomal protein uL6 family. As to quaternary structure, part of the 50S ribosomal subunit.

Functionally, this protein binds to the 23S rRNA, and is important in its secondary structure. It is located near the subunit interface in the base of the L7/L12 stalk, and near the tRNA binding site of the peptidyltransferase center. This Shewanella baltica (strain OS223) protein is Large ribosomal subunit protein uL6.